The primary structure comprises 570 residues: Protein translocase subunit SecD (570 aa).

Positions 104-117 are enriched in polar residues; it reads GANATGTPSASETG. The tract at residues 104-198 is disordered; that stretch reads GANATGTPSA…SASASGDDAT (95 aa). A compositionally biased stretch (basic and acidic residues) spans 122-146; it reads KATDKATDKATDKATDGDKATDGDK. 2 stretches are compositionally biased toward low complexity: residues 147–161 and 172–196; these read ASGTPSDSASASATS and ADPSPSATSSDGASPSPSASASGDD. 5 helical membrane passes run 370–390, 395–415, 419–439, 474–494, and 498–518; these read AGLIAGAIGLALVVLYLLFYY, FIAVCSLLVSAGLTYVIMALL, IGFALNLPAVCGAIVAIGITA, ILVSDFVSFLAAAVLFIVTVG, and GFAFTLGLTTLLDVVVVFLFT. The segment at 540–570 is disordered; that stretch reads LDPKALGAKPPLRRTRRPSRPAAGPVDPKEA.

It belongs to the SecD/SecF family. SecD subfamily. In terms of assembly, forms a complex with SecF. Part of the essential Sec protein translocation apparatus which comprises SecA, SecYEG and auxiliary proteins SecDF. Other proteins may also be involved.

It is found in the cell membrane. Its function is as follows. Part of the Sec protein translocase complex. Interacts with the SecYEG preprotein conducting channel. SecDF uses the proton motive force (PMF) to complete protein translocation after the ATP-dependent function of SecA. The protein is Protein translocase subunit SecD of Streptomyces coelicolor (strain ATCC BAA-471 / A3(2) / M145).